The sequence spans 389 residues: Type II methyltransferase M1.ScrFI (389 aa).

The HTH cro/C1-type domain occupies 16–71 (IKEKRLRLNMTQKELADAVGMSKNGDRTIRRWENGETCPSQLEISAILRFPEIAPF). In terms of domain architecture, SAM-dependent MTase C5-type spans 79–387 (YKMIDLFAGI…EKMLEVLEKS (309 aa)). The active site involves cysteine 149.

It belongs to the class I-like SAM-binding methyltransferase superfamily. C5-methyltransferase family.

It catalyses the reaction a 2'-deoxycytidine in DNA + S-adenosyl-L-methionine = a 5-methyl-2'-deoxycytidine in DNA + S-adenosyl-L-homocysteine + H(+). Functionally, a methylase, recognizes the double-stranded sequence 5'-CCNGG-3', methylates C-2 on both strands, and protects the DNA from cleavage by the ScrFI endonuclease. In Lactococcus lactis subsp. cremoris (Streptococcus cremoris), this protein is Type II methyltransferase M1.ScrFI (scrFIAM).